The chain runs to 359 residues: Adenosine deaminase (359 aa).

Zn(2+) contacts are provided by His-15 and His-17. Positions 17, 19, and 184 each coordinate substrate. Position 213 (His-213) interacts with Zn(2+). Glu-216 serves as the catalytic Proton donor. Zn(2+) is bound at residue Asp-295. Asp-296 is a substrate binding site.

It belongs to the metallo-dependent hydrolases superfamily. Adenosine and AMP deaminases family. The cofactor is Zn(2+).

It localises to the cell membrane. The protein resides in the cell junction. Its subcellular location is the cytoplasmic vesicle lumen. It is found in the cytoplasm. The protein localises to the lysosome. It carries out the reaction adenosine + H2O + H(+) = inosine + NH4(+). The enzyme catalyses 2'-deoxyadenosine + H2O + H(+) = 2'-deoxyinosine + NH4(+). In terms of biological role, catalyzes the hydrolytic deamination of adenosine and 2-deoxyadenosine. Plays an important role in purine metabolism and in adenosine homeostasis. Modulates signaling by extracellular adenosine, and so contributes indirectly to cellular signaling events. May act as a positive regulator of T-cell coactivation. This chain is Adenosine deaminase (ada), found in Danio rerio (Zebrafish).